We begin with the raw amino-acid sequence, 294 residues long: Elongation factor Ts (294 aa).

The tract at residues 80-83 is involved in Mg(2+) ion dislocation from EF-Tu; that stretch reads TDFV.

The protein belongs to the EF-Ts family.

It localises to the cytoplasm. In terms of biological role, associates with the EF-Tu.GDP complex and induces the exchange of GDP to GTP. It remains bound to the aminoacyl-tRNA.EF-Tu.GTP complex up to the GTP hydrolysis stage on the ribosome. The polypeptide is Elongation factor Ts (Polynucleobacter necessarius subsp. necessarius (strain STIR1)).